Reading from the N-terminus, the 431-residue chain is Salivary plasminogen activator beta (431 aa).

The N-terminal stretch at 1 to 36 is a signal peptide; the sequence is MVNTMKTKLLCVLLLCGAVFSLPRQETYRQLARGSR. The region spanning 37–75 is the EGF-like domain; that stretch reads AYGGCSELRCFNGGTCWQAASFSDFVCQCPKGYTGKQCE. Cystine bridges form between cysteine 41–cysteine 52, cysteine 46–cysteine 63, cysteine 65–cysteine 74, cysteine 82–cysteine 163, cysteine 103–cysteine 145, cysteine 134–cysteine 158, cysteine 168–cysteine 299, cysteine 211–cysteine 227, cysteine 219–cysteine 288, cysteine 313–cysteine 388, cysteine 345–cysteine 361, and cysteine 378–cysteine 406. The region spanning 82 to 163 is the Kringle domain; it reads CYKDQGVTYR…ILEFCSVPVC (82 aa). The N-linked (GlcNAc...) asparagine glycan is linked to asparagine 139. The 251-residue stretch at 180–430 folds into the Peptidase S1 domain; that stretch reads STGGLFTDIT…YLGWIRDNMR (251 aa). Catalysis depends on charge relay system residues histidine 226 and aspartate 275. The N-linked (GlcNAc...) asparagine glycan is linked to asparagine 352. The active-site Charge relay system is the serine 382.

It belongs to the peptidase S1 family. As to quaternary structure, monomer.

It localises to the secreted. The enzyme catalyses Specific cleavage of Arg-|-Val bond in plasminogen to form plasmin.. Functionally, probably essential to support the feeding habits of this exclusively haematophagous animal. Probable potent thrombolytic agent. The polypeptide is Salivary plasminogen activator beta (Desmodus rotundus (Vampire bat)).